Consider the following 100-residue polypeptide: Pregnancy-associated protein bPAP (100 aa).

A disordered region spans residues 1 to 40 (DSELAGPRGARGPHGLSGPHGLSGLXGPXGYTGPIGMXGL). A compositionally biased stretch (low complexity) spans 13–29 (PHGLSGPHGLSGLXGPX).

Detected at high levels in the urine of pregnant females (at protein level) and at far lower levels in the urine of nonpregnant females.

The polypeptide is Pregnancy-associated protein bPAP (Bos taurus (Bovine)).